Consider the following 179-residue polypeptide: Large ribosomal subunit protein uL6c (179 aa).

It belongs to the universal ribosomal protein uL6 family. As to quaternary structure, part of the 50S ribosomal subunit.

It localises to the plastid. The protein localises to the chloroplast. Its function is as follows. Binds 23S rRNA. This chain is Large ribosomal subunit protein uL6c (rpl6), found in Guillardia theta (Cryptophyte).